Consider the following 392-residue polypeptide: Enoyl-[acyl-carrier-protein] reductase [NADH] (392 aa).

NAD(+) is bound by residues 48–53, 74–75, 111–112, and 139–140; these read GCSTGY, FE, DA, and LA. Tyr-225 contributes to the substrate binding site. Tyr-235 acts as the Proton donor in catalysis. Residues Lys-244 and 273–275 contribute to the NAD(+) site; that span reads LVT.

The protein belongs to the TER reductase family. In terms of assembly, monomer.

The catalysed reaction is a 2,3-saturated acyl-[ACP] + NAD(+) = a (2E)-enoyl-[ACP] + NADH + H(+). Its pathway is lipid metabolism; fatty acid biosynthesis. Its function is as follows. Involved in the final reduction of the elongation cycle of fatty acid synthesis (FAS II). Catalyzes the reduction of a carbon-carbon double bond in an enoyl moiety that is covalently linked to an acyl carrier protein (ACP). The polypeptide is Enoyl-[acyl-carrier-protein] reductase [NADH] (Idiomarina loihiensis (strain ATCC BAA-735 / DSM 15497 / L2-TR)).